A 161-amino-acid polypeptide reads, in one-letter code: Allophycocyanin beta chain (161 aa).

Asn71 carries the N4-methylasparagine modification. Cys81 contributes to the (2R,3E)-phycocyanobilin binding site.

It belongs to the phycobiliprotein family. As to quaternary structure, heterodimer of an alpha and a beta chain. In terms of processing, contains one covalently linked phycocyanobilin chromophore.

It localises to the cellular thylakoid membrane. In terms of biological role, light-harvesting photosynthetic bile pigment-protein from the phycobiliprotein complex. Allophycocyanin has a maximum absorption at approximately 650 nanometers. In Mastigocladus laminosus (Fischerella sp.), this protein is Allophycocyanin beta chain (apcB).